The chain runs to 363 residues: Ribonuclease P protein subunit p40 (363 aa).

In terms of assembly, component of nuclear RNase P and RNase MRP ribonucleoproteins. RNase P consists of a catalytic RNA moiety and about 10 protein subunits; POP1, POP4, POP5, POP7, RPP14, RPP21, RPP25, RPP30, RPP38 and RPP40. Within the RNase P complex, POP1, POP7 and RPP25 form the 'finger' subcomplex, POP5, RPP14, RPP40 and homodimeric RPP30 form the 'palm' subcomplex, and RPP21, POP4 and RPP38 form the 'wrist' subcomplex. All subunits of the RNase P complex interact with the catalytic RNA. Several subunits of RNase P are also part of the RNase MRP complex. RNase MRP consists of a catalytic RNA moiety and about 8 protein subunits; POP1, POP7, RPP25, RPP30, RPP38, RPP40 and possibly also POP4 and POP5.

It is found in the nucleus. It localises to the nucleolus. Functionally, component of ribonuclease P, a ribonucleoprotein complex that generates mature tRNA molecules by cleaving their 5'-ends. Also a component of the MRP ribonuclease complex, which cleaves pre-rRNA sequences. In Rattus norvegicus (Rat), this protein is Ribonuclease P protein subunit p40 (Rpp40).